Here is a 178-residue protein sequence, read N- to C-terminus: Small ribosomal subunit protein uS5 (178 aa).

One can recognise an S5 DRBM domain in the interval 13–76 (LEERVVQINR…EAAKRNLIRV (64 aa)). The segment at 156–178 (ASRRDMTPQELMERRTRRETEAA) is disordered.

This sequence belongs to the universal ribosomal protein uS5 family. Part of the 30S ribosomal subunit. Contacts proteins S4 and S8.

With S4 and S12 plays an important role in translational accuracy. Its function is as follows. Located at the back of the 30S subunit body where it stabilizes the conformation of the head with respect to the body. The sequence is that of Small ribosomal subunit protein uS5 from Chloroflexus aurantiacus (strain ATCC 29364 / DSM 637 / Y-400-fl).